A 231-amino-acid chain; its full sequence is 2,3-bisphosphoglycerate-dependent phosphoglycerate mutase (231 aa).

Substrate-binding positions include 8–15, 21–22, Arg60, 87–90, Lys98, 114–115, and 183–184; these read RHGESEWN, TG, ERHY, RR, and GN. The Tele-phosphohistidine intermediate role is filled by His9. The active-site Proton donor/acceptor is Glu87.

This sequence belongs to the phosphoglycerate mutase family. BPG-dependent PGAM subfamily.

It catalyses the reaction (2R)-2-phosphoglycerate = (2R)-3-phosphoglycerate. Its pathway is carbohydrate degradation; glycolysis; pyruvate from D-glyceraldehyde 3-phosphate: step 3/5. Functionally, catalyzes the interconversion of 2-phosphoglycerate and 3-phosphoglycerate. This Streptococcus equi subsp. zooepidemicus (strain H70) protein is 2,3-bisphosphoglycerate-dependent phosphoglycerate mutase.